Reading from the N-terminus, the 364-residue chain is NAC transcription factor 56 (364 aa).

Positions 1–23 (MESTDSSGGPPPPQPNLPPGFRF) are disordered. Positions 9–18 (GPPPPQPNLP) are enriched in pro residues. Residues 17–178 (LPPGFRFHPT…DWVLCRIYKK (162 aa)) enclose the NAC domain. A DNA-binding region spans residues 116–184 (VGVKKALVFY…IYKKNNASRH (69 aa)).

In terms of tissue distribution, stamen specific, in anthers from stage 8. Expressed in the outer integument, but seems not expressed in the embryo at the torpedo stage.

Its subcellular location is the nucleus. Its function is as follows. Transcription factor of the NAC family. Together with NAC018/NARS2, regulates embryogenesis by regulating the development and degeneration of ovule integuments, a process required for intertissue communication between the embryo and the maternal integument. This chain is NAC transcription factor 56, found in Arabidopsis thaliana (Mouse-ear cress).